Reading from the N-terminus, the 529-residue chain is Neuronal acetylcholine receptor subunit alpha-2 (529 aa).

A signal peptide spans 1-26 (MGPSCPVFLSFTKLSLWWLLLTPAGG). A disordered region spans residues 27–56 (EEAKRPPPRAPGDPLSSPSPTALPQGGSHT). Topologically, residues 27–264 (EEAKRPPPRA…VTYAFIIRRL (238 aa)) are extracellular. N-linked (GlcNAc...) asparagine glycosylation is found at N79 and N129. Residues C183 and C197 are joined by a disulfide bond. An N-linked (GlcNAc...) asparagine glycan is attached at N235. C247 and C248 form a disulfide bridge. A run of 3 helical transmembrane segments spans residues 265 to 289 (PLFY…VFYL), 297 to 315 (ITLC…LLIT), and 331 to 352 (YLLF…VLNV). At 353 to 502 (HHRSPSTHTM…WKYVAMVIDR (150 aa)) the chain is on the cytoplasmic side. Residues 503–521 (IFLWLFIIVCFLGTIGLFL) form a helical membrane-spanning segment.

The protein belongs to the ligand-gated ion channel (TC 1.A.9) family. Acetylcholine receptor (TC 1.A.9.1) subfamily. Alpha-2/CHRNA2 sub-subfamily. Neuronal AChR is composed of two different types of subunits: alpha and non-alpha (beta). CHRNA2/alpha-2 subunit can be combined to CHRNB2/beta-2 or CHRNB4/beta-4 to give rise to functional receptors. Both CHRNA2:CHRNB2 and CHRNA2:CHRNB4 nAChR complexes are heteropentamers with two subtypes: LS (low agonist sensitivity) with a (CHRNA2)3:(CHRNB2/4)2 and HS (high agonist sensitivity) with a (CHRNA2)2:(CHRNB2/4)3 stoichiometries; the subtypes differ in their subunit binding interfaces which are involved in ligand binding.

The protein localises to the synaptic cell membrane. The protein resides in the cell membrane. It catalyses the reaction Ca(2+)(in) = Ca(2+)(out). The enzyme catalyses K(+)(in) = K(+)(out). The catalysed reaction is Na(+)(in) = Na(+)(out). Component of neuronal acetylcholine receptors (nAChRs) that function as pentameric, ligand-gated cation channels with high calcium permeability among other activities. nAChRs are excitatory neurotrasnmitter receptors formed by a collection of nAChR subunits known to mediate synaptic transmission in the nervous system and the neuromuscular junction. Each nAchR subunit confers differential attributes to channel properties, including activation, deactivation and desensitization kinetics, pH sensitivity, cation permeability, and binding to allosteric modulators. CHRNA2 forms heteropentameric neuronal acetylcholine receptors with CHRNB2 and CHRNB4 and plays a role in nicotine dependence. The chain is Neuronal acetylcholine receptor subunit alpha-2 (CHRNA2) from Pan troglodytes (Chimpanzee).